Here is a 666-residue protein sequence, read N- to C-terminus: tRNA 5-methylaminomethyl-2-thiouridine biosynthesis bifunctional protein MnmC (666 aa).

A tRNA (mnm(5)s(2)U34)-methyltransferase region spans residues 1-253 (MSSPFVPIIT…KRHMICAHYE (253 aa)). The tract at residues 283-666 (VGGGLAGCFI…FLRKKIIQGP (384 aa)) is FAD-dependent cmnm(5)s(2)U34 oxidoreductase.

In the N-terminal section; belongs to the methyltransferase superfamily. tRNA (mnm(5)s(2)U34)-methyltransferase family. It in the C-terminal section; belongs to the DAO family. FAD serves as cofactor.

It localises to the cytoplasm. It catalyses the reaction 5-aminomethyl-2-thiouridine(34) in tRNA + S-adenosyl-L-methionine = 5-methylaminomethyl-2-thiouridine(34) in tRNA + S-adenosyl-L-homocysteine + H(+). Catalyzes the last two steps in the biosynthesis of 5-methylaminomethyl-2-thiouridine (mnm(5)s(2)U) at the wobble position (U34) in tRNA. Catalyzes the FAD-dependent demodification of cmnm(5)s(2)U34 to nm(5)s(2)U34, followed by the transfer of a methyl group from S-adenosyl-L-methionine to nm(5)s(2)U34, to form mnm(5)s(2)U34. The protein is tRNA 5-methylaminomethyl-2-thiouridine biosynthesis bifunctional protein MnmC of Legionella pneumophila subsp. pneumophila (strain Philadelphia 1 / ATCC 33152 / DSM 7513).